Reading from the N-terminus, the 1502-residue chain is tRNA (32-2'-O)-methyltransferase regulator trm732 (1502 aa).

The protein belongs to the THADA family.

It is found in the cytoplasm. It localises to the nucleus. Its function is as follows. Together with methyltransferase trm7, methylates the 2'-O-ribose of nucleotides at position 32 of the anticodon loop of substrate tRNAs. The polypeptide is tRNA (32-2'-O)-methyltransferase regulator trm732 (Schizosaccharomyces pombe (strain 972 / ATCC 24843) (Fission yeast)).